The sequence spans 418 residues: Alpha-tubulin N-acetyltransferase 1 (418 aa).

Residues 1–186 enclose the N-acetyltransferase domain; sequence MEFEFDVHKI…NNFVVFEGFF (186 aa). Acetyl-CoA contacts are provided by residues 120 to 133 and 156 to 165; these read FYIH…GFGK and SEKFLSFLRK. Disordered stretches follow at residues 237-292 and 322-353; these read SSLG…MNLS and QIKE…HQND. Residues 277-287 are compositionally biased toward basic and acidic residues; it reads QEDHSQRRRTS. The span at 329 to 353 shows a compositional bias: polar residues; the sequence is RTDSSAQEGRTQDRPNGSNSQHQND.

This sequence belongs to the acetyltransferase ATAT1 family.

It is found in the cytoplasm. The protein resides in the membrane. The protein localises to the clathrin-coated pit. Its subcellular location is the cell junction. It localises to the focal adhesion. It is found in the cell projection. The protein resides in the axon. The protein localises to the cytoskeleton. Its subcellular location is the spindle. The catalysed reaction is L-lysyl-[alpha-tubulin] + acetyl-CoA = N(6)-acetyl-L-lysyl-[alpha-tubulin] + CoA + H(+). In terms of biological role, specifically acetylates 'Lys-40' in alpha-tubulin on the lumenal side of microtubules. Promotes microtubule destabilization and accelerates microtubule dynamics; this activity may be independent of acetylation activity. Acetylates alpha-tubulin with a slow enzymatic rate, due to a catalytic site that is not optimized for acetyl transfer. Enters the microtubule through each end and diffuses quickly throughout the lumen of microtubules. Acetylates only long/old microtubules because of its slow acetylation rate since it does not have time to act on dynamically unstable microtubules before the enzyme is released. May be involved in neuron development. The protein is Alpha-tubulin N-acetyltransferase 1 of Xenopus laevis (African clawed frog).